The following is a 684-amino-acid chain: Cleavage and polyadenylation specificity factor subunit 3 (684 aa).

Serine 2 carries the N-acetylserine modification. Histidine 71, histidine 73, aspartate 75, histidine 76, histidine 158, and aspartate 179 together coordinate Zn(2+). The Proton donor role is filled by histidine 396. Zn(2+) is bound at residue histidine 418. Glycyl lysine isopeptide (Lys-Gly) (interchain with G-Cter in SUMO) cross-links involve residues lysine 462, lysine 465, and lysine 545. Residue serine 659 is modified to Phosphoserine. Threonine 681 bears the Phosphothreonine mark.

This sequence belongs to the metallo-beta-lactamase superfamily. RNA-metabolizing metallo-beta-lactamase-like family. CPSF3 subfamily. In terms of assembly, component of the cleavage and polyadenylation specificity factor (CPSF) complex, composed of CPSF1, CPSF2, CPSF3, CPSF4 and FIP1L1. Interacts with CPSF2, CSTF2 and SYMPK. Interacts with TUT1; the interaction is direct and mediates the recruitment of the CPSF complex on the 3'UTR of pre-mRNAs. Interacts with WDR33. Interacts with ZC3H3. Zn(2+) serves as cofactor. In terms of processing, sumoylated on Lys-462, Lys-465 and Lys-545, preferentially by SUMO3.

The protein resides in the nucleus. In terms of biological role, component of the cleavage and polyadenylation specificity factor (CPSF) complex that plays a key role in pre-mRNA 3'-end formation, recognizing the AAUAAA signal sequence and interacting with poly(A) polymerase and other factors to bring about cleavage and poly(A) addition. Has endonuclease activity, and functions as an mRNA 3'-end-processing endonuclease. Also involved in the histone 3'-end pre-mRNA processing. U7 snRNP-dependent protein that induces both the 3'-endoribonucleolytic cleavage of histone pre-mRNAs and acts as a 5' to 3' exonuclease for degrading the subsequent downstream cleavage product (DCP) of mature histone mRNAs. Cleavage occurs after the 5'-ACCCA-3' sequence in the histone pre-mRNA leaving a 3'hydroxyl group on the upstream fragment containing the stem loop (SL) and 5' phosphate on the downstream cleavage product (DCP) starting with CU nucleotides. The U7-dependent 5' to 3' exonuclease activity is processive and degrades the DCP RNA substrate even after complete removal of the U7-binding site. Binds to the downstream cleavage product (DCP) of histone pre-mRNAs and the cleaved DCP RNA substrate in a U7 snRNP dependent manner. Required for entering/progressing through S-phase of the cell cycle. Required for the selective processing of microRNAs (miRNAs) during embryonic stem cell differentiation via its interaction with ISY1. Required for the biogenesis of all miRNAs from the pri-miR-17-92 primary transcript except miR-92a. Only required for the biogenesis of miR-290 and miR-96 from the pri-miR-290-295 and pri-miR-96-183 primary transcripts, respectively. This Bos taurus (Bovine) protein is Cleavage and polyadenylation specificity factor subunit 3 (CPSF3).